The sequence spans 83 residues: MKTSMFLTLTGLVLLFVVCYASESEEKEFPKELPSSIFAADSDFKVEERGCLGDKCDYNNGCCSGYVCSRTWKWCVLAGPWRR.

An N-terminal signal peptide occupies residues 1–21 (MKTSMFLTLTGLVLLFVVCYA). A propeptide spanning residues 22-49 (SESEEKEFPKELPSSIFAADSDFKVEER) is cleaved from the precursor. 3 cysteine pairs are disulfide-bonded: C51–C63, C56–C68, and C62–C75.

The protein belongs to the neurotoxin 10 (Hwtx-1) family. 51 (Hntx-8) subfamily. Hntx-8 sub-subfamily. Expressed by the venom gland.

The protein resides in the secreted. In terms of biological role, agglutinates erythrocytes. In Cyriopagopus schmidti (Chinese bird spider), this protein is U5-theraphotoxin-Hs1a 5.